The following is a 214-amino-acid chain: Transcriptional regulatory protein ComA (214 aa).

Positions 3 to 121 (KILVIDDHPA…KITQYIYHVL (119 aa)) constitute a Response regulatory domain. At D55 the chain carries 4-aspartylphosphate. The region spanning 147 to 212 (SQKEQDVLTP…EAVLIAKSDG (66 aa)) is the HTH luxR-type domain. The H-T-H motif DNA-binding region spans 171–190 (NQEIADALHLSKRSIEYSLT).

Post-translationally, phosphorylated by ComP.

Its subcellular location is the cytoplasm. Functionally, response regulator in the two-component regulatory system ComP/ComA involved in a major quorum response pathway that regulates the development of genetic competence. Regulates directly the expression of over 20 genes, including genes of the srfA operon, degQ, rapA, rapC, rapE, rapF, etc. Regulates indirectly, through the regulation of comK transcription, the expression of late competence genes. In Bacillus subtilis (strain 168), this protein is Transcriptional regulatory protein ComA (comA).